A 167-amino-acid chain; its full sequence is Large ribosomal subunit protein uL10 (167 aa).

Belongs to the universal ribosomal protein uL10 family. Part of the ribosomal stalk of the 50S ribosomal subunit. The N-terminus interacts with L11 and the large rRNA to form the base of the stalk. The C-terminus forms an elongated spine to which L12 dimers bind in a sequential fashion forming a multimeric L10(L12)X complex.

Its function is as follows. Forms part of the ribosomal stalk, playing a central role in the interaction of the ribosome with GTP-bound translation factors. The chain is Large ribosomal subunit protein uL10 from Tolumonas auensis (strain DSM 9187 / NBRC 110442 / TA 4).